We begin with the raw amino-acid sequence, 245 residues long: Adenosylcobinamide-GDP ribazoletransferase (245 aa).

5 helical membrane-spanning segments follow: residues 31–51 (FGRA…VLYG), 61–81 (PLLQ…ALHL), 113–133 (AAVV…AALL), 138–158 (PGLL…LFLT), and 192–212 (LAFG…FAWL).

This sequence belongs to the CobS family. The cofactor is Mg(2+).

It is found in the cell inner membrane. The enzyme catalyses alpha-ribazole + adenosylcob(III)inamide-GDP = adenosylcob(III)alamin + GMP + H(+). It carries out the reaction alpha-ribazole 5'-phosphate + adenosylcob(III)inamide-GDP = adenosylcob(III)alamin 5'-phosphate + GMP + H(+). It participates in cofactor biosynthesis; adenosylcobalamin biosynthesis; adenosylcobalamin from cob(II)yrinate a,c-diamide: step 7/7. In terms of biological role, joins adenosylcobinamide-GDP and alpha-ribazole to generate adenosylcobalamin (Ado-cobalamin). Also synthesizes adenosylcobalamin 5'-phosphate from adenosylcobinamide-GDP and alpha-ribazole 5'-phosphate. This is Adenosylcobinamide-GDP ribazoletransferase from Pseudomonas paraeruginosa (strain DSM 24068 / PA7) (Pseudomonas aeruginosa (strain PA7)).